An 867-amino-acid chain; its full sequence is Coiled-coil domain-containing protein 178 (867 aa).

Coiled coils occupy residues 153-204 (DEKC…KIDS), 233-414 (WHLE…ENQY), 445-470 (ACTK…TNES), and 662-696 (MIFY…KNKF).

The sequence is that of Coiled-coil domain-containing protein 178 (CCDC178) from Homo sapiens (Human).